A 133-amino-acid polypeptide reads, in one-letter code: Cytidine deaminase (133 aa).

Positions 3-131 constitute a CMP/dCMP-type deaminase domain; sequence VDLDWVHHKL…EILKGGFRSY (129 aa). 43–45 is a substrate binding site; it reads NIE. Cysteine 54 lines the Zn(2+) pocket. Catalysis depends on glutamate 56, which acts as the Proton donor. Residues cysteine 89 and cysteine 92 each coordinate Zn(2+).

The protein belongs to the cytidine and deoxycytidylate deaminase family. In terms of assembly, homodimer. The cofactor is Zn(2+).

The catalysed reaction is cytidine + H2O + H(+) = uridine + NH4(+). The enzyme catalyses 2'-deoxycytidine + H2O + H(+) = 2'-deoxyuridine + NH4(+). This enzyme scavenges exogenous and endogenous cytidine and 2'-deoxycytidine for UMP synthesis. The polypeptide is Cytidine deaminase (cdd) (Mycoplasma pneumoniae (strain ATCC 29342 / M129 / Subtype 1) (Mycoplasmoides pneumoniae)).